Consider the following 393-residue polypeptide: E3 ubiquitin-protein transferase RMND5B (393 aa).

Met1 is subject to N-acetylmethionine. Residues 116 to 148 (QQQILQMAIVEHLYQQGMLSVAEELCQESTLNV) enclose the LisH domain. Residues 155 to 212 (PFLELNRILEALHEQDLGPALEWAVSHRQRLLELNSSLEFKLHRLHFIRLLAGGPEKQ) form the CTLH domain. The segment at 338–379 (CPILRQQTSDSNPPIKLICGHVISRDALNKLINGGKLKCPYC) adopts an RING-Gid-type zinc-finger fold.

As to quaternary structure, identified in the CTLH complex that contains GID4, RANBP9 and/or RANBP10, MKLN1, MAEA, RMND5A (or alternatively its paralog RMND5B), GID8, ARMC8, WDR26 and YPEL5. Within this complex, MAEA, RMND5A (or alternatively its paralog RMND5B), GID8, WDR26, and RANBP9 and/or RANBP10 form the catalytic core, while GID4, MKLN1, ARMC8 and YPEL5 have ancillary roles.

Its subcellular location is the cytoplasm. It is found in the cytosol. It catalyses the reaction S-ubiquitinyl-[E2 ubiquitin-conjugating enzyme]-L-cysteine + [acceptor protein]-L-lysine = [E2 ubiquitin-conjugating enzyme]-L-cysteine + N(6)-ubiquitinyl-[acceptor protein]-L-lysine.. Its function is as follows. Core component of the CTLH E3 ubiquitin-protein ligase complex that selectively accepts ubiquitin from UBE2H and mediates ubiquitination and subsequent proteasomal degradation of the transcription factor HBP1. MAEA and RMND5A are both required for catalytic activity of the CTLH E3 ubiquitin-protein ligase complex. Catalytic activity of the complex is required for normal cell proliferation. The CTLH E3 ubiquitin-protein ligase complex is not required for the degradation of enzymes involved in gluconeogenesis, such as FBP1. The protein is E3 ubiquitin-protein transferase RMND5B (Rmnd5b) of Mus musculus (Mouse).